A 352-amino-acid chain; its full sequence is Isopentenyl-diphosphate delta-isomerase (352 aa).

6–7 lines the substrate pocket; the sequence is RK. FMN contacts are provided by residues 63 to 65, Ser-93, and Asn-122; that span reads AMT. 93 to 95 is a binding site for substrate; sequence SQR. Residue Gln-160 participates in substrate binding. Mg(2+) is bound at residue Glu-161. FMN-binding positions include Lys-192, Thr-221, 271–273, and 292–293; these read GIR and SQ.

Belongs to the IPP isomerase type 2 family. As to quaternary structure, homooctamer. Dimer of tetramers. It depends on FMN as a cofactor. NADPH serves as cofactor. Requires Mg(2+) as cofactor.

Its subcellular location is the cytoplasm. It catalyses the reaction isopentenyl diphosphate = dimethylallyl diphosphate. Its function is as follows. Involved in the biosynthesis of isoprenoids. Catalyzes the 1,3-allylic rearrangement of the homoallylic substrate isopentenyl (IPP) to its allylic isomer, dimethylallyl diphosphate (DMAPP). In Pyrobaculum arsenaticum (strain DSM 13514 / JCM 11321 / PZ6), this protein is Isopentenyl-diphosphate delta-isomerase.